An 883-amino-acid polypeptide reads, in one-letter code: Alanine--tRNA ligase (883 aa).

Residues H562, H566, C664, and H668 each coordinate Zn(2+).

It belongs to the class-II aminoacyl-tRNA synthetase family. In terms of assembly, homotetramer. It depends on Zn(2+) as a cofactor.

The protein resides in the cytoplasm. The catalysed reaction is tRNA(Ala) + L-alanine + ATP = L-alanyl-tRNA(Ala) + AMP + diphosphate. Its function is as follows. Catalyzes the attachment of alanine to tRNA(Ala) in a two-step reaction: alanine is first activated by ATP to form Ala-AMP and then transferred to the acceptor end of tRNA(Ala). Also edits incorrectly charged Ser-tRNA(Ala) and Gly-tRNA(Ala) via its editing domain. This chain is Alanine--tRNA ligase, found in Buchnera aphidicola subsp. Schizaphis graminum (strain Sg).